Here is a 361-residue protein sequence, read N- to C-terminus: Protein RecA (361 aa).

77-84 is a binding site for ATP; it reads GPESSGKT.

It belongs to the RecA family.

It localises to the cytoplasm. Can catalyze the hydrolysis of ATP in the presence of single-stranded DNA, the ATP-dependent uptake of single-stranded DNA by duplex DNA, and the ATP-dependent hybridization of homologous single-stranded DNAs. It interacts with LexA causing its activation and leading to its autocatalytic cleavage. The sequence is that of Protein RecA from Rhizobium etli.